The chain runs to 964 residues: Reticulon-3 (964 aa).

Over residues 1–24 the composition is skewed to low complexity; the sequence is MAESSAATQSPSVSSSSSGAEPSA. Disordered stretches follow at residues 1 to 32, 68 to 109, and 179 to 200; these read MAESSAATQSPSVSSSSSGAEPSALGGGGGSP, AGLS…SETL, and WVVKDQEPKNPNKVPDGEDRSA. N-acetylalanine is present on A2. At 2–795 the chain is on the cytoplasmic side; that stretch reads AESSAATQSP…KKTGFVFGTT (794 aa). S31 bears the Phosphoserine mark. Over residues 80-91 the composition is skewed to low complexity; it reads SKSMTSSFLSSS. Residues S217, S225, S230, S233, S270, S303, and S429 each carry the phosphoserine modification. The interval 479 to 536 is disordered; it reads ITEKPDSLPSAAAKTSEREIKETPSRETVRSEMCENSEQPQAQPETPTQKSLEGEVAS. Positions 493-511 are enriched in basic and acidic residues; that stretch reads TSEREIKETPSRETVRSEM. Residues 516 to 527 show a composition bias toward low complexity; that stretch reads EQPQAQPETPTQ. S529 is subject to Phosphoserine. At T593 the chain carries Phosphothreonine. S596, S597, and S673 each carry phosphoserine. 2 disordered regions span residues 645–674 and 697–723; these read ELSGSETKNIKSKYSEDSRETTGGAPTMSP and VQDEGISSGGKLKQTFAPQSGPQSSSD. Positions 712–723 are enriched in polar residues; the sequence is FAPQSGPQSSSD. Residues 776-964 form the Reticulon domain; it reads VHDLIFWRDV…LPGIAKKKAE (189 aa). The segment at residues 796 to 819 is an intramembrane region (helical); sequence LIMLLSLAAFSVISVVSYLILALL. At 820–876 the chain is on the cytoplasmic side; that stretch reads SVTISFRVYKSVIQAVQKSEEGHPFKAYLDVDITLSSEAFHNYMNAAMVHVNKALKL. The segment at residues 877–899 is an intramembrane region (helical); sequence IIRLFLVEDLVDSLKLAVFMWLM. At 900-903 the chain is on the cytoplasmic side; that stretch reads TYVG. The helical intramembrane region spans 904–926; that stretch reads AVFNGITLLILAELLVFSVPIVY. Residues 919 to 964 form an interaction with FADD region; it reads VFSVPIVYEKYKTQIDHYVGIARDQTKSIVEKIQAKLPGIAKKKAE. The Cytoplasmic segment spans residues 927 to 964; it reads EKYKTQIDHYVGIARDQTKSIVEKIQAKLPGIAKKKAE. Positions 932 to 934 are interaction with BACE1; the sequence is QID.

In terms of assembly, homodimer. Interacts with RTN4. Isoform 3 interacts with BACE1, BACE2, BCL2 and FADD. Interacts with ATL1 and ATL2. Isoform 3 interacts with TMEM33. Interacts with ZFYVE27 and with KIF5A in a ZFYVE27-dependent manner. Interacts with RIGI. Interacts with TRIM25. Isoform 1, isoform 3, isoform 4 and isoform 5 are expressed in spinal cord. Isoform 1 is present in brain, where it is expressed in the neurons of cerebral cortex, hippocampus, hypothalamus and cerebellum (at protein level).

The protein localises to the endoplasmic reticulum membrane. The protein resides in the golgi apparatus membrane. Functionally, may be involved in membrane trafficking in the early secretory pathway. Inhibits BACE1 activity and amyloid precursor protein processing. May induce caspase-8 cascade and apoptosis. May favor BCL2 translocation to the mitochondria upon endoplasmic reticulum stress. Induces the formation of endoplasmic reticulum tubules. Also acts as an inflammation-resolving regulator by interacting with both TRIM25 and RIGI, subsequently impairing RIGI 'Lys-63'-linked polyubiquitination leading to IRF3 and NF-kappa-B inhibition. This Mus musculus (Mouse) protein is Reticulon-3 (Rtn3).